The chain runs to 340 residues: Delta-aminolevulinic acid dehydratase (340 aa).

Residues C134, C136, and C144 each contribute to the Zn(2+) site. The Schiff-base intermediate with substrate role is filled by K211. R221 and R233 together coordinate 5-aminolevulinate. K264 (schiff-base intermediate with substrate) is an active-site residue. Positions 291 and 330 each coordinate 5-aminolevulinate.

This sequence belongs to the ALAD family. Homooctamer. Zn(2+) is required as a cofactor.

The enzyme catalyses 2 5-aminolevulinate = porphobilinogen + 2 H2O + H(+). Its pathway is porphyrin-containing compound metabolism; protoporphyrin-IX biosynthesis; coproporphyrinogen-III from 5-aminolevulinate: step 1/4. Functionally, catalyzes an early step in the biosynthesis of tetrapyrroles. Binds two molecules of 5-aminolevulinate per subunit, each at a distinct site, and catalyzes their condensation to form porphobilinogen. This Eremothecium gossypii (strain ATCC 10895 / CBS 109.51 / FGSC 9923 / NRRL Y-1056) (Yeast) protein is Delta-aminolevulinic acid dehydratase (HEM2).